Here is a 248-residue protein sequence, read N- to C-terminus: Probable transcriptional regulatory protein Oant_1200 (248 aa).

This sequence belongs to the TACO1 family.

It localises to the cytoplasm. This chain is Probable transcriptional regulatory protein Oant_1200, found in Brucella anthropi (strain ATCC 49188 / DSM 6882 / CCUG 24695 / JCM 21032 / LMG 3331 / NBRC 15819 / NCTC 12168 / Alc 37) (Ochrobactrum anthropi).